The primary structure comprises 294 residues: MSEAYRQPVLGVIGGSGVYDIDGLEGARWQTVESPFGDVSDQILRGTLDGLEMAFLPRHGRGHVLAPSDVNYRANIDALKRAGVTEILSVSAVGSLAEDLPPGTFVIADQFIDRTFAREKSFFGKGLVAHVSMAHPVSAWLGDRVEEVLADLAIPHRRGGTYLCMEGPQFSTLAESNLYRQWGCHVIGMTNMPEAKLAREAEIAYCTVAMVTDFDCWHPDHDHVSVEAVVRVLLQNADKARSLVKAMPAKLKDRPYPLPDGSHRSLDNAIITHPDRRNPGMARKLSAVAGRVLG.

Residues Ser-16, 58–59 (RH), and 91–92 (SA) each bind phosphate. Met-189 is a substrate binding site. Residue Thr-190 participates in phosphate binding. Substrate is bound at residue 213 to 215 (DFD).

The protein belongs to the PNP/MTAP phosphorylase family. MTAP subfamily. As to quaternary structure, homohexamer. Dimer of a homotrimer.

It catalyses the reaction S-methyl-5'-thioadenosine + phosphate = 5-(methylsulfanyl)-alpha-D-ribose 1-phosphate + adenine. The catalysed reaction is 5'-deoxyadenosine + phosphate = 5-deoxy-alpha-D-ribose 1-phosphate + adenine. It participates in amino-acid biosynthesis; L-methionine biosynthesis via salvage pathway; S-methyl-5-thio-alpha-D-ribose 1-phosphate from S-methyl-5'-thioadenosine (phosphorylase route): step 1/1. Its function is as follows. Catalyzes the reversible phosphorylation of S-methyl-5'-thioadenosine (MTA) to adenine and 5-methylthioribose-1-phosphate. Involved in the breakdown of MTA, a major by-product of polyamine biosynthesis. Responsible for the first step in the methionine salvage pathway after MTA has been generated from S-adenosylmethionine. Has broad substrate specificity with 6-aminopurine nucleosides as preferred substrates. Also catalyzes the phosphorylation of 5'-deoxyadenosine (5'dAdo) to 5-deoxyribose 1-phosphate. Part of a bifunctional DHAP-shunt salvage pathway for SAM by-products. The protein is S-methyl-5'-thioadenosine phosphorylase of Rhodospirillum rubrum (strain ATCC 11170 / ATH 1.1.1 / DSM 467 / LMG 4362 / NCIMB 8255 / S1).